A 980-amino-acid chain; its full sequence is Exportin-T (980 aa).

It belongs to the exportin family. As to expression, expressed in roots, stems, leaves, flowers and embryos.

The protein resides in the nucleus. It localises to the cytoplasm. Its function is as follows. Probable tRNA nucleus export receptor which regulates tRNA processing and facilitates tRNA translocation across the nuclear pore complex. Is required for correct leaf initiation at different developmental stages and may play a role in floral patterning. In Oryza sativa subsp. japonica (Rice), this protein is Exportin-T.